The chain runs to 265 residues: Inositol monophosphatase 2 (265 aa).

Positions 65, 86, 88, and 89 each coordinate Mg(2+). Glu65 serves as a coordination point for substrate. Residues 88-91 (LDGT), 189-191 (GSC), Glu208, and Asp216 contribute to the substrate site. Position 216 (Asp216) interacts with Mg(2+).

Belongs to the inositol monophosphatase superfamily. It depends on Mg(2+) as a cofactor. In terms of tissue distribution, low expression in roots, stems, leaves, flowers and young and mature green fruits. Expressed in the stem/leaf junctions, below the shoot apex and on the abaxial side of the petiole of the first expanded leaflets.

It carries out the reaction a myo-inositol phosphate + H2O = myo-inositol + phosphate. It participates in polyol metabolism; myo-inositol biosynthesis; myo-inositol from D-glucose 6-phosphate: step 2/2. Responsible for the provision of inositol required for synthesis of phosphatidylinositol and polyphosphoinositides. The polypeptide is Inositol monophosphatase 2 (IMP2) (Solanum lycopersicum (Tomato)).